A 116-amino-acid polypeptide reads, in one-letter code: Putative iron-sulfur cluster insertion protein ErpA (116 aa).

Iron-sulfur cluster contacts are provided by C44, C108, and C110.

Belongs to the HesB/IscA family. Homodimer. It depends on iron-sulfur cluster as a cofactor.

Its function is as follows. Required for insertion of 4Fe-4S clusters. This is Putative iron-sulfur cluster insertion protein ErpA from Dechloromonas aromatica (strain RCB).